Reading from the N-terminus, the 223-residue chain is Translation initiation factor 6 (223 aa).

This sequence belongs to the eIF-6 family.

In terms of biological role, binds to the 50S ribosomal subunit and prevents its association with the 30S ribosomal subunit to form the 70S initiation complex. This chain is Translation initiation factor 6, found in Sulfurisphaera tokodaii (strain DSM 16993 / JCM 10545 / NBRC 100140 / 7) (Sulfolobus tokodaii).